A 206-amino-acid polypeptide reads, in one-letter code: Protease (206 aa).

Catalysis depends on residues histidine 55, aspartate 72, and cysteine 122.

It belongs to the peptidase C5 family. As to quaternary structure, interacts with protease cofactor pVI-C; this interaction is necessary for protease activation.

The protein resides in the virion. The protein localises to the host nucleus. The catalysed reaction is Cleaves proteins of the adenovirus and its host cell at two consensus sites: -Yaa-Xaa-Gly-Gly-|-Xaa- and -Yaa-Xaa-Gly-Xaa-|-Gly- (in which Yaa is Met, Ile or Leu, and Xaa is any amino acid).. Requires DNA and protease cofactor for maximal activation. Inside nascent virions, becomes partially activated by binding to the viral DNA, allowing it to cleave the cofactor that binds to the protease and fully activates it. Actin, like the viral protease cofactor, seems to act as a cofactor in the cleavage of cytokeratin 18 and of actin itself. In terms of biological role, cleaves viral precursor proteins (pTP, pIIIa, pVI, pVII, pVIII, and pX) inside newly assembled particles giving rise to mature virions. Protease complexed to its cofactor slides along the viral DNA to specifically locate and cleave the viral precursors. Mature virions have a weakened organization compared to the unmature virions, thereby facilitating subsequent uncoating. Without maturation, the particle lacks infectivity and is unable to uncoat. Late in adenovirus infection, in the cytoplasm, may participate in the cytoskeleton destruction. Cleaves host cell cytoskeletal keratins K7 and K18. The chain is Protease from Fowl adenovirus A serotype 1 (strain CELO / Phelps) (FAdV-1).